A 95-amino-acid chain; its full sequence is Co-chaperonin GroES (95 aa).

This sequence belongs to the GroES chaperonin family. In terms of assembly, heptamer of 7 subunits arranged in a ring. Interacts with the chaperonin GroEL.

It localises to the cytoplasm. In terms of biological role, together with the chaperonin GroEL, plays an essential role in assisting protein folding. The GroEL-GroES system forms a nano-cage that allows encapsulation of the non-native substrate proteins and provides a physical environment optimized to promote and accelerate protein folding. GroES binds to the apical surface of the GroEL ring, thereby capping the opening of the GroEL channel. In Clostridium acetobutylicum (strain ATCC 824 / DSM 792 / JCM 1419 / IAM 19013 / LMG 5710 / NBRC 13948 / NRRL B-527 / VKM B-1787 / 2291 / W), this protein is Co-chaperonin GroES.